We begin with the raw amino-acid sequence, 142 residues long: Chorion class A protein Ld19 (142 aa).

A signal peptide spans 1–18 (MNSFALLLVCIQACLVQS).

The protein belongs to the chorion protein family.

Functionally, this protein is one of many from the eggshell of the gypsy moth. This is Chorion class A protein Ld19 from Lymantria dispar (Gypsy moth).